A 149-amino-acid polypeptide reads, in one-letter code: Nucleoside diphosphate kinase (149 aa).

Positions 9, 57, 85, 91, 102, and 112 each coordinate ATP. His-115 functions as the Pros-phosphohistidine intermediate in the catalytic mechanism.

Belongs to the NDK family. In terms of assembly, homotetramer. Mg(2+) is required as a cofactor.

It is found in the cytoplasm. It carries out the reaction a 2'-deoxyribonucleoside 5'-diphosphate + ATP = a 2'-deoxyribonucleoside 5'-triphosphate + ADP. The catalysed reaction is a ribonucleoside 5'-diphosphate + ATP = a ribonucleoside 5'-triphosphate + ADP. Functionally, major role in the synthesis of nucleoside triphosphates other than ATP. The ATP gamma phosphate is transferred to the NDP beta phosphate via a ping-pong mechanism, using a phosphorylated active-site intermediate. This is Nucleoside diphosphate kinase from Synechocystis sp. (strain ATCC 27184 / PCC 6803 / Kazusa).